A 1013-amino-acid polypeptide reads, in one-letter code: Hemoglobin-binding protein A (1013 aa).

Positions Met-1 to Ala-24 are cleaved as a signal peptide. 8 tandem repeats follow at residues Gln-26–Asn-29, Gln-30–Asn-33, Gln-34–Asn-37, Gln-38–Asn-41, Gln-42–Asn-45, Gln-46–Asn-49, Gln-50–Asn-53, and Gln-54–Asn-57. An 8 X 4 AA tandem repeats of Q-P-T-N region spans residues Gln-26 to Asn-57. The segment covering Gln-26–Gln-58 has biased composition (low complexity). Residues Gln-26 to Asn-61 are disordered. The short motif at Glu-67–Ser-74 is the TonB box element. The region spanning Ser-78 to Lys-205 is the TBDR plug domain. A TBDR beta-barrel domain is found at Asn-213 to Phe-1013. A TonB C-terminal box motif is present at residues Asn-996–Phe-1013.

This sequence belongs to the TonB-dependent receptor family. Hemoglobin/haptoglobin binding protein subfamily.

It localises to the cell outer membrane. Acts as a receptor for hemoglobin of the human host and is required for heme uptake. In Haemophilus influenzae, this protein is Hemoglobin-binding protein A (hgbA).